The chain runs to 830 residues: uncharacterized protein (830 aa).

Disordered stretches follow at residues 1–28 (MGVQLKLDPNSKNWLRQPDQQPIQDSIC), 70–147 (RRAN…GNFA), and 186–210 (AASPTVSFSPASTSENLTPTSSKSL). Polar residues predominate over residues 10 to 27 (NSKNWLRQPDQQPIQDSI). Composition is skewed to low complexity over residues 100–130 (QKSSNSRKSIRSQSRSRSSSVGSDSQASIQS) and 186–199 (AASPTVSFSPASTS). Positions 200-210 (ENLTPTSSKSL) are enriched in polar residues. The next 10 helical transmembrane spans lie at 505–525 (WLVAFMHGVASASILPVVYGG), 529–549 (DMLIGFVLGLLLGIFRVYINP), 551–571 (FFLFDSLFEVIISIILSFLGR), 584–604 (FCFAALVEGAITLILPGYVVF), 622–642 (MLYAVIFSLFLSFGITIGSAL), 659–679 (IIAVSPYWYILLIPIFTLSLL), 691–711 (IQMFVACCGYVVYYFSSLHFG), 715–735 (ISSAIGSFAVGCLGNMYSHFI), 740–760 (FAVVLPAIFVLVPSGFAAQGG), and 802–822 (IAIGIAIGFLASSLTVYPFFG).

The protein belongs to the ThrE exporter (TC 2.A.79) family.

The protein localises to the cell membrane. Its subcellular location is the cell tip. This is an uncharacterized protein from Schizosaccharomyces pombe (strain 972 / ATCC 24843) (Fission yeast).